Reading from the N-terminus, the 310-residue chain is Phosphoribosylaminoimidazole-succinocarboxamide synthase (310 aa).

Belongs to the SAICAR synthetase family.

It catalyses the reaction 5-amino-1-(5-phospho-D-ribosyl)imidazole-4-carboxylate + L-aspartate + ATP = (2S)-2-[5-amino-1-(5-phospho-beta-D-ribosyl)imidazole-4-carboxamido]succinate + ADP + phosphate + 2 H(+). It functions in the pathway purine metabolism; IMP biosynthesis via de novo pathway; 5-amino-1-(5-phospho-D-ribosyl)imidazole-4-carboxamide from 5-amino-1-(5-phospho-D-ribosyl)imidazole-4-carboxylate: step 1/2. The polypeptide is Phosphoribosylaminoimidazole-succinocarboxamide synthase (Stenotrophomonas maltophilia (strain K279a)).